Here is a 434-residue protein sequence, read N- to C-terminus: GTPase Obg (434 aa).

The 159-residue stretch at 2-160 (PTFVDQTKIE…RVLRLELKLL (159 aa)) folds into the Obg domain. Positions 161–334 (ADVGLVGFPS…LMNDTATLVE (174 aa)) constitute an OBG-type G domain. Residues 167-174 (GFPSVGKS), 192-196 (FTTLT), 214-217 (DLPG), 284-287 (SQMD), and 315-317 (SSV) each bind GTP. Mg(2+)-binding residues include Ser174 and Thr194. One can recognise an OCT domain in the interval 356–434 (YKAPQKNEFT…IGKFVFEFVQ (79 aa)).

Belongs to the TRAFAC class OBG-HflX-like GTPase superfamily. OBG GTPase family. In terms of assembly, monomer. The cofactor is Mg(2+).

It localises to the cytoplasm. Its function is as follows. An essential GTPase which binds GTP, GDP and possibly (p)ppGpp with moderate affinity, with high nucleotide exchange rates and a fairly low GTP hydrolysis rate. Plays a role in control of the cell cycle, stress response, ribosome biogenesis and in those bacteria that undergo differentiation, in morphogenesis control. This is GTPase Obg from Lactobacillus helveticus (strain DPC 4571).